The chain runs to 692 residues: Elongation factor G (692 aa).

The tr-type G domain occupies 9-284 (HKVRNIGIAA…AVVDYLPAPD (276 aa)). GTP contacts are provided by residues 18-25 (AHIDAGKT), 82-86 (DTPGH), and 136-139 (NKMD).

This sequence belongs to the TRAFAC class translation factor GTPase superfamily. Classic translation factor GTPase family. EF-G/EF-2 subfamily.

Its subcellular location is the cytoplasm. Functionally, catalyzes the GTP-dependent ribosomal translocation step during translation elongation. During this step, the ribosome changes from the pre-translocational (PRE) to the post-translocational (POST) state as the newly formed A-site-bound peptidyl-tRNA and P-site-bound deacylated tRNA move to the P and E sites, respectively. Catalyzes the coordinated movement of the two tRNA molecules, the mRNA and conformational changes in the ribosome. This Campylobacter concisus (strain 13826) protein is Elongation factor G.